Reading from the N-terminus, the 648-residue chain is DNA gyrase subunit B (648 aa).

Positions 433 to 547 constitute a Toprim domain; sequence SELYIVEGDS…KGHVYIAQPP (115 aa). Mg(2+) is bound by residues Glu439, Asp512, and Asp514.

Belongs to the type II topoisomerase GyrB family. As to quaternary structure, heterotetramer, composed of two GyrA and two GyrB chains. In the heterotetramer, GyrA contains the active site tyrosine that forms a transient covalent intermediate with DNA, while GyrB binds cofactors and catalyzes ATP hydrolysis. Mg(2+) is required as a cofactor. The cofactor is Mn(2+). Requires Ca(2+) as cofactor.

It is found in the cytoplasm. The enzyme catalyses ATP-dependent breakage, passage and rejoining of double-stranded DNA.. A type II topoisomerase that negatively supercoils closed circular double-stranded (ds) DNA in an ATP-dependent manner to modulate DNA topology and maintain chromosomes in an underwound state. Negative supercoiling favors strand separation, and DNA replication, transcription, recombination and repair, all of which involve strand separation. Also able to catalyze the interconversion of other topological isomers of dsDNA rings, including catenanes and knotted rings. Type II topoisomerases break and join 2 DNA strands simultaneously in an ATP-dependent manner. This chain is DNA gyrase subunit B, found in Mycoplasmoides gallisepticum (strain R(low / passage 15 / clone 2)) (Mycoplasma gallisepticum).